The following is a 958-amino-acid chain: Glycine dehydrogenase (decarboxylating) (958 aa).

At Lys-705 the chain carries N6-(pyridoxal phosphate)lysine.

This sequence belongs to the GcvP family. As to quaternary structure, the glycine cleavage system is composed of four proteins: P, T, L and H. Requires pyridoxal 5'-phosphate as cofactor.

It catalyses the reaction N(6)-[(R)-lipoyl]-L-lysyl-[glycine-cleavage complex H protein] + glycine + H(+) = N(6)-[(R)-S(8)-aminomethyldihydrolipoyl]-L-lysyl-[glycine-cleavage complex H protein] + CO2. In terms of biological role, the glycine cleavage system catalyzes the degradation of glycine. The P protein binds the alpha-amino group of glycine through its pyridoxal phosphate cofactor; CO(2) is released and the remaining methylamine moiety is then transferred to the lipoamide cofactor of the H protein. The chain is Glycine dehydrogenase (decarboxylating) from Bdellovibrio bacteriovorus (strain ATCC 15356 / DSM 50701 / NCIMB 9529 / HD100).